Here is a 794-residue protein sequence, read N- to C-terminus: PAN2-PAN3 deadenylation complex subunit PAN3 (794 aa).

The C3H1-type zinc finger occupies 7–36; it reads SAKDVLCKNILIYGYCKFQDKGCAFSHNKQ. Disordered regions lie at residues 40-97 and 187-226; these read PQQQ…TQSK and AQVG…QQQL. 2 stretches are compositionally biased toward polar residues: residues 83–94 and 189–199; these read IQSNGMVNSQET and VGNNPGSTAPA. The segment covering 200-226 has biased composition (low complexity); that stretch reads NLQLQQKQPQQPQQPQQPQQHQQQQQL. The tract at residues 372–668 is pseudokinase domain; that stretch reads QTMQHLSLPD…MDQFILQYIS (297 aa). Residues Arg425 and 494–501 each bind ATP; that span reads DYYPNLTT. Residues 669–707 are a coiled coil; it reads SHFMTLMNKLQNSHDWVELQLSTELENARLFRLMTKINF. Residues 708-794 form a knob domain region; it reads IISEMPTYDL…IDTQFRLLRG (87 aa).

This sequence belongs to the protein kinase superfamily. PAN3 family. As to quaternary structure, homodimer. Forms a heterotrimer with a catalytic subunit PAN2 to form the poly(A)-nuclease (PAN) deadenylation complex. Interacts (via PAM-2 motif) with poly(A)-binding protein PAB1 (via PABC domain), conferring substrate specificity of the enzyme complex.

The protein resides in the cytoplasm. Its function is as follows. Regulatory subunit of the poly(A)-nuclease (PAN) deadenylation complex, one of two cytoplasmic mRNA deadenylases involved in mRNA turnover. PAN specifically shortens poly(A) tails of RNA and the activity is stimulated by poly(A)-binding protein PAB1. PAN deadenylation is followed by rapid degradation of the shortened mRNA tails by the CCR4-NOT complex. Deadenylated mRNAs are then degraded by two alternative mechanisms, namely exosome-mediated 3'-5' exonucleolytic degradation, or deadenylation-dependent mRNA decaping and subsequent 5'-3' exonucleolytic degradation by XRN1. May also be involved in post-transcriptional maturation of mRNA poly(A) tails. PAN3 acts as a positive regulator for PAN activity, recruiting the catalytic subunit PAN2 to mRNA via its interaction with RNA and with PAB1. This Lodderomyces elongisporus (strain ATCC 11503 / CBS 2605 / JCM 1781 / NBRC 1676 / NRRL YB-4239) (Yeast) protein is PAN2-PAN3 deadenylation complex subunit PAN3.